The primary structure comprises 225 residues: Cyanamide hydratase DDI2 (225 aa).

The HD domain maps to 52-162; sequence VLNHSLRVFQ…LQIATTLDNV (111 aa).

Belongs to the cyanamide dehydrase family. Homohexamer. Zn(2+) is required as a cofactor.

The enzyme catalyses urea = cyanamide + H2O. In terms of biological role, cyanamide hydratase involved in the detoxification and/or utilization of cyanamide, a toxic nitrile compound distributed widely in the environment. The chain is Cyanamide hydratase DDI2 from Saccharomyces cerevisiae (strain ATCC 204508 / S288c) (Baker's yeast).